Here is a 265-residue protein sequence, read N- to C-terminus: Very long chain fatty acid elongase 6 (265 aa).

N-linked (GlcNAc...) asparagine glycosylation occurs at Asn2. Transmembrane regions (helical) follow at residues 34–51 (FLFSALYAAFIFGGRHLM), 70–90 (LAVFSIFGALRTGAYMVYILM), 111–131 (FWAYAFVLSKAPELGDTIFII), 136–156 (KLIFLHWYHHITVLLYSWYSY), 159–179 (MVAGGGWFMTMNYGVHAVMYS), 197–217 (FITLSQITQMLMGCVVNYLVF), and 232–252 (IFWSSLMYLSYLVLFCHFFFE).

This sequence belongs to the ELO family. ELOVL6 subfamily. Post-translationally, N-Glycosylated. As to expression, ubiquitous.

Its subcellular location is the endoplasmic reticulum membrane. The catalysed reaction is a very-long-chain acyl-CoA + malonyl-CoA + H(+) = a very-long-chain 3-oxoacyl-CoA + CO2 + CoA. The enzyme catalyses hexadecanoyl-CoA + malonyl-CoA + H(+) = 3-oxooctadecanoyl-CoA + CO2 + CoA. It carries out the reaction (9Z)-hexadecenoyl-CoA + malonyl-CoA + H(+) = 3-oxo-(11Z)-octadecenoyl-CoA + CO2 + CoA. It catalyses the reaction dodecanoyl-CoA + malonyl-CoA + H(+) = 3-oxotetradecanoyl-CoA + CO2 + CoA. The catalysed reaction is tetradecanoyl-CoA + malonyl-CoA + H(+) = 3-oxohexadecanoyl-CoA + CO2 + CoA. The enzyme catalyses (9Z)-octadecenoyl-CoA + malonyl-CoA + H(+) = 3-oxo-(11Z)-eicosenoyl-CoA + CO2 + CoA. It carries out the reaction (9Z,12Z)-octadecadienoyl-CoA + malonyl-CoA + H(+) = (11Z,14Z)-3-oxoicosa-11,14-dienoyl-CoA + CO2 + CoA. It catalyses the reaction (9Z,12Z,15Z)-octadecatrienoyl-CoA + malonyl-CoA + H(+) = (11Z,14Z,17Z)-3-oxoeicosatrienoyl-CoA + CO2 + CoA. It functions in the pathway lipid metabolism; fatty acid biosynthesis. Its activity is regulated as follows. The reaction is stimulated by the presence of HSD17B12, the enzyme catalyzing the second step of the elongation cycle. Catalyzes the first and rate-limiting reaction of the four reactions that constitute the long-chain fatty acids elongation cycle. This endoplasmic reticulum-bound enzymatic process allows the addition of 2 carbons to the chain of long- and very long-chain fatty acids (VLCFAs) per cycle. Condensing enzyme that elongates fatty acids with 12, 14 and 16 carbons with higher activity toward C16:0 acyl-CoAs. Catalyzes the synthesis of unsaturated C16 long chain fatty acids and, to a lesser extent, C18:0 and those with low desaturation degree. May participate in the production of saturated and monounsaturated VLCFAs of different chain lengths that are involved in multiple biological processes as precursors of membrane lipids and lipid mediators. The chain is Very long chain fatty acid elongase 6 from Homo sapiens (Human).